We begin with the raw amino-acid sequence, 374 residues long: Serine/threonine-protein kinase-transforming protein mos (374 aa).

A Protein kinase domain is found at 94-370 (VCLMHRLGSG…LLQRDLKAFR (277 aa)). ATP-binding positions include 100–108 (LGSGGFGSV) and Lys-121. Asp-229 functions as the Proton acceptor in the catalytic mechanism.

This sequence belongs to the protein kinase superfamily. Ser/Thr protein kinase family.

The catalysed reaction is L-seryl-[protein] + ATP = O-phospho-L-seryl-[protein] + ADP + H(+). It catalyses the reaction L-threonyl-[protein] + ATP = O-phospho-L-threonyl-[protein] + ADP + H(+). This is Serine/threonine-protein kinase-transforming protein mos (V-MOS) from Mus musculus (Mouse).